The sequence spans 365 residues: MSLEEKKKPESKEKDKALSLVLGQIERNFGRGSIMRLGDASRMKVETISTGALTLDLALGGGYPKGRVVEVYGPESSGKTTLTLHAIAEVQKNGGVAAFVDAEHALDPVYAASLGVDVENLLVSQPDTGEMALEIVDQLIRSSAVDLVVVDSVAALTPRAEIEGEMGDHVIGSQARLMSQAMRKITGNIGKSGCTVIFLNQLRLKIGVTYGNPETTTGGNALKFYASVRLDIRRIQTLKRGTEEYGIRAKVKVAKNKVAPPFRIAEFDILFGKGISTTGCLLDLAEETNIIIRRGAWYSYEGENIGQGRDNTIIWLDQNLEIRNKVESMVKEKLTEGTEVSSNSMKALNSNPANTIAVNDIKTVA.

73 to 80 (GPESSGKT) contributes to the ATP binding site.

This sequence belongs to the RecA family.

It is found in the cytoplasm. Functionally, can catalyze the hydrolysis of ATP in the presence of single-stranded DNA, the ATP-dependent uptake of single-stranded DNA by duplex DNA, and the ATP-dependent hybridization of homologous single-stranded DNAs. It interacts with LexA causing its activation and leading to its autocatalytic cleavage. This is Protein RecA from Prochlorococcus marinus (strain MIT 9312).